The chain runs to 378 residues: Ribosomal RNA large subunit methyltransferase G (378 aa).

Belongs to the methyltransferase superfamily. RlmG family.

The protein localises to the cytoplasm. It carries out the reaction guanosine(1835) in 23S rRNA + S-adenosyl-L-methionine = N(2)-methylguanosine(1835) in 23S rRNA + S-adenosyl-L-homocysteine + H(+). Its function is as follows. Specifically methylates the guanine in position 1835 (m2G1835) of 23S rRNA. This Escherichia coli O1:K1 / APEC protein is Ribosomal RNA large subunit methyltransferase G.